A 593-amino-acid polypeptide reads, in one-letter code: Scarecrow-like protein 1 (593 aa).

2 disordered regions span residues 29–61 (NPKL…PCLT) and 188–216 (YQNE…SKEV). Residues 35 to 48 (LNENGNNNGVSSAQ) are compositionally biased toward polar residues. Residues 202–211 (SSSADSNSHV) show a composition bias toward low complexity. A GRAS domain is found at 213–593 (SKEVVSQATP…KSLIVASAWR (381 aa)). Residues 220–280 (ATPKQILISC…AARMAASGKF (61 aa)) are leucine repeat I (LRI). The tract at residues 299–364 (MQVLFEVCPC…GKRPRLRLTG (66 aa)) is VHIID. The short motif at 330-334 (VHIID) is the VHIID element. The leucine repeat II (LRII) stretch occupies residues 380–411 (IIGLRLEQLAEDNGVSFKFKAMPSKTSIVSPS). The tract at residues 421 to 515 (LIVNFAFQLH…RQCLARDIVN (95 aa)) is PFYRE. An SAW region spans residues 518–593 (ACEGEERIER…KSLIVASAWR (76 aa)).

It belongs to the GRAS family. As to expression, expressed in seedlings, roots, shoots, leaves, flowers and siliques.

It localises to the nucleus. Its function is as follows. Probable transcription factor involved in plant development. The protein is Scarecrow-like protein 1 (SCL1) of Arabidopsis thaliana (Mouse-ear cress).